Consider the following 98-residue polypeptide: UPF0473 protein LSL_1108 (98 aa).

It belongs to the UPF0473 family.

This Ligilactobacillus salivarius (strain UCC118) (Lactobacillus salivarius) protein is UPF0473 protein LSL_1108.